Here is a 385-residue protein sequence, read N- to C-terminus: V-type proton ATPase subunit C (385 aa).

It belongs to the V-ATPase C subunit family. As to quaternary structure, V-ATPase is a heteromultimeric enzyme made up of two complexes: the ATP-hydrolytic V1 complex and the proton translocation V0 complex. The V1 complex consists of three catalytic AB heterodimers that form a heterohexamer, three peripheral stalks each consisting of EG heterodimers, one central rotor including subunits D and F, and the regulatory subunits C and H. The proton translocation complex V0 consists of the proton transport subunit a, a ring of proteolipid subunits c9c'', rotary subunit d, subunits e and f, and the accessory subunits VhaAC45 and ATP6AP2.

Its function is as follows. Subunit of the V1 complex of vacuolar(H+)-ATPase (V-ATPase), a multisubunit enzyme composed of a peripheral complex (V1) that hydrolyzes ATP and a membrane integral complex (V0) that translocates protons. V-ATPase is responsible for acidifying and maintaining the pH of intracellular compartments and in some cell types, is targeted to the plasma membrane, where it is responsible for acidifying the extracellular environment. Subunit C is necessary for the assembly of the catalytic sector of the enzyme and is likely to have a specific function in its catalytic activity. This Manduca sexta (Tobacco hawkmoth) protein is V-type proton ATPase subunit C.